The chain runs to 84 residues: UPF0386 protein R01313 (84 aa).

This sequence belongs to the UPF0386 family.

This is UPF0386 protein R01313 from Rhizobium meliloti (strain 1021) (Ensifer meliloti).